Reading from the N-terminus, the 341-residue chain is Retinol dehydrogenase 10 (341 aa).

The chain crosses the membrane as a helical; Signal-anchor span at residues 3–23; it reads IVVEFFVVTFKVLWAFVLAAA. 40–64 lines the NADP(+) pocket; the sequence is LITGAGSGLGRLFALEFARRRALLV. Ser197 contacts substrate. Tyr210 serves as the catalytic Proton acceptor.

Belongs to the short-chain dehydrogenases/reductases (SDR) family. In terms of tissue distribution, detected in retinal pigment epithelium (at protein level). Detected in retina, retinal pigment epithelium, and at lower levels in cornea, liver, kidney, pancreas, lung, brain and skeletal muscle.

It localises to the microsome membrane. Its subcellular location is the endoplasmic reticulum membrane. It catalyses the reaction all-trans-retinol + NADP(+) = all-trans-retinal + NADPH + H(+). It functions in the pathway cofactor metabolism; retinol metabolism. In terms of biological role, retinol dehydrogenase with a clear preference for NADP. Converts all-trans-retinol to all-trans-retinal. Has no detectable activity towards 11-cis-retinol, 9-cis-retinol and 13-cis-retinol. The chain is Retinol dehydrogenase 10 (RDH10) from Bos taurus (Bovine).